Reading from the N-terminus, the 1251-residue chain is Probable transcription factor TDA9 (1251 aa).

2 C2H2-type zinc fingers span residues 61-83 and 89-112; these read FLCHICTRGFVRQEHLKRHQRAH and FLCVFCGRCFARRDLVLRHQHKLH. Disordered stretches follow at residues 160 to 227 and 398 to 428; these read VQLK…KSKR and NHSHPDSRHNNSSSGINYSNNKNNNESIEKS. Residues 164–173 show a composition bias toward basic residues; sequence KAAKEKKNGK. A compositionally biased stretch (polar residues) spans 183 to 202; that stretch reads YGANNHSTDVSPSVGNSSTP. The span at 407 to 428 shows a compositional bias: low complexity; sequence NNSSSGINYSNNKNNNESIEKS. A phosphoserine mark is found at S527 and S603. A compositionally biased stretch (low complexity) spans 617 to 634; the sequence is SLTPSLTTQTATTQSGPG. The tract at residues 617-636 is disordered; it reads SLTPSLTTQTATTQSGPGWT.

Belongs to the RSF2/TDA9 family.

The protein localises to the nucleus. In terms of biological role, DNA-binding protein that acts probably as a transcription factor. The sequence is that of Probable transcription factor TDA9 (TDA9) from Saccharomyces cerevisiae (strain ATCC 204508 / S288c) (Baker's yeast).